A 763-amino-acid chain; its full sequence is Long-chain-fatty-acid--CoA ligase ACSBG2 (763 aa).

The disordered stretch occupies residues 47-78 (CSMKPADDPKTERSQMNKTGLASSSRPASNVW). Over residues 51–61 (PADDPKTERSQ) the composition is skewed to basic and acidic residues. Over residues 62–78 (MNKTGLASSSRPASNVW) the composition is skewed to polar residues. Residues 281–289 (TSGTTGQPK), 472–477 (ELYGMS), Asp550, Arg565, and Lys678 each bind ATP.

The protein belongs to the ATP-dependent AMP-binding enzyme family. Bubblegum subfamily.

It is found in the cytoplasm. The catalysed reaction is a long-chain fatty acid + ATP + CoA = a long-chain fatty acyl-CoA + AMP + diphosphate. It carries out the reaction (5Z,8Z,11Z,14Z)-eicosatetraenoate + ATP + CoA = (5Z,8Z,11Z,14Z)-eicosatetraenoyl-CoA + AMP + diphosphate. The enzyme catalyses hexadecanoate + ATP + CoA = hexadecanoyl-CoA + AMP + diphosphate. It catalyses the reaction (9Z)-octadecenoate + ATP + CoA = (9Z)-octadecenoyl-CoA + AMP + diphosphate. The catalysed reaction is (9Z,12Z)-octadecadienoate + ATP + CoA = (9Z,12Z)-octadecadienoyl-CoA + AMP + diphosphate. It carries out the reaction tetracosanoate + ATP + CoA = tetracosanoyl-CoA + AMP + diphosphate. Its function is as follows. Mediates activation of long-chain fatty acids for both synthesis of cellular lipids, and degradation via beta-oxidation. In terms of biological role, catalyzes the conversion of fatty acids such as long chain and very long-chain fatty acids to their active form acyl-CoAs for both synthesis of cellular lipids, and degradation via beta-oxidation. Can activate diverse saturated, monosaturated and polyunsaturated fatty acids. This is Long-chain-fatty-acid--CoA ligase ACSBG2 from Gallus gallus (Chicken).